The sequence spans 197 residues: Probable molybdenum cofactor guanylyltransferase (197 aa).

GTP-binding positions include 12–14 (LAG), lysine 24, aspartate 71, and aspartate 103. Residue aspartate 103 participates in Mg(2+) binding.

The protein belongs to the MobA family. It depends on Mg(2+) as a cofactor.

The protein resides in the cytoplasm. It catalyses the reaction Mo-molybdopterin + GTP + H(+) = Mo-molybdopterin guanine dinucleotide + diphosphate. In terms of biological role, transfers a GMP moiety from GTP to Mo-molybdopterin (Mo-MPT) cofactor (Moco or molybdenum cofactor) to form Mo-molybdopterin guanine dinucleotide (Mo-MGD) cofactor. The protein is Probable molybdenum cofactor guanylyltransferase of Mycobacterium avium (strain 104).